Reading from the N-terminus, the 906-residue chain is Glutamate receptor 1 (906 aa).

The first 18 residues, 1 to 18 (MQHIFAFFCTGFLGAVVG), serve as a signal peptide directing secretion. Over 19-536 (ANFPNNIQIG…GVFSFLDPLA (518 aa)) the chain is Extracellular. 6 N-linked (GlcNAc...) asparagine glycosylation sites follow: Asn63, Asn249, Asn257, Asn363, Asn401, and Asn406. A disulfide bond links Cys75 and Cys323. Residues Pro492, Thr494, and Arg499 each contribute to the L-glutamate site. The chain crosses the membrane as a helical span at residues 537–557 (YEIWMCIVFAYIGVSVVLFLV). At 558–584 (SRFSPYEWHSEEFEEGRDQTTSDQSNE) the chain is on the cytoplasmic side. Residues 585–600 (FGIFNSLWFSLGAFMQ) constitute an intramembrane region (helical; Pore-forming). The stretch at 601–603 (QGC) is an intramembrane region. A lipid anchor (S-palmitoyl cysteine) is attached at Cys603. At 604–609 (DISPRS) the chain is on the cytoplasmic side. Residues 610–630 (LSGRIVGGVWWFFTLIIISSY) traverse the membrane as a helical segment. The Extracellular segment spans residues 631–805 (TANLAAFLTV…DKTSALSLSN (175 aa)). Phosphoserine is present on Ser645. L-glutamate contacts are provided by Ser668 and Thr669. Ser710 is subject to Phosphoserine. Glu719 is a binding site for L-glutamate. Cys732 and Cys787 are disulfide-bonded. The helical transmembrane segment at 806–826 (VAGVFYILIGGLGLAMLVALI) threads the bilayer. Over 827 to 906 (EFCYKSRSES…SGMPLGATGL (80 aa)) the chain is Cytoplasmic. The S-palmitoyl cysteine moiety is linked to residue Cys829. Ser849 and Ser863 each carry phosphoserine. Positions 861–880 (RNSGAGASSGGSGENGRVVS) are disordered. The PDZ-binding signature appears at 903-906 (ATGL).

The protein belongs to the glutamate-gated ion channel (TC 1.A.10.1) family. GRIA1 subfamily. Homotetramer or heterotetramer of pore-forming glutamate receptor subunits; heteromeric assembly can be the result of both receptor subtype and flip or flop form and according the composition, one partner can be dominant with respect to the fast desensitizing current component, whereas the other can determine the steady-state component. Tetramers may be formed by the dimerization of dimers. Found in a complex with GRIA2, GRIA3, GRIA4, CNIH2, CNIH3, CACNG2, CACNG3, CACNG4, CACNG5, CACNG7 and CACNG8. Interacts with HIP1 and RASGRF2. Interacts with SYNDIG1 and GRIA2. Interacts with DLG1 (via C-terminus). Interacts with LRFN1. Interacts with PRKG2. Interacts with CNIH2 and CACNG2. Interacts with CACNG5; this interaction modulates the gating. Interacts (via C-terminus) with PDLIM4 (via LIM domain); this interaction as well as the interaction of PDLIM4 with alpha-actinin is required for their colocalization in early endosomes. Interacts with SNX27 (via PDZ domain); the interaction is required for recycling to the plasma membrane when endocytosed and prevent degradation in lysosomes. Interacts (via PDZ-binding motif) with SHANK3 (via PDZ domain). Interacts with CACNG3; associates GRIA1 with the adapter protein complex 4 (AP-4) to target GRIA1 to the somatodendritic compartment of neurons. Interacts with CACNG2; this interaction mediates traffick to the plasma membrane and modulation of desensitization. Interacts with CNIH2 and CNIH3; this interaction promotes expression at the plasma membrane and extensively modulates their gating properties by slowing deactivation and desensitization kinetics. Found in a complex with GRIA2, GRIA3, GRIA4, DLG4, CACNG8 and CNIH2. Palmitoylated. Depalmitoylated by CPT1C and upon L-glutamate stimulation. ZDHHC3/GODZ specifically palmitoylates Cys-603, which leads to Golgi retention and decreased cell surface expression. In contrast, Cys-829 palmitoylation does not affect cell surface expression but regulates stimulation-dependent endocytosis. In terms of processing, phosphorylated at Ser-645. Phosphorylated at Ser-710 by PKC. Phosphorylated at Ser-849 by PKC, PKA and CAMK2. Phosphorylated at Ser-863 by PKC, PKA and PRKG2. Phosphorylation of Ser-863 is reduced by induction of long-term depression and increased by induction of long-term potentiation. As to expression, widely expressed in brain.

It localises to the cell membrane. The protein localises to the endoplasmic reticulum membrane. It is found in the postsynaptic cell membrane. The protein resides in the postsynaptic density membrane. Its subcellular location is the cell projection. It localises to the dendrite. The protein localises to the dendritic spine. It is found in the early endosome membrane. The protein resides in the recycling endosome membrane. Its subcellular location is the presynapse. It localises to the synapse. It carries out the reaction Ca(2+)(in) = Ca(2+)(out). The catalysed reaction is Na(+)(in) = Na(+)(out). The enzyme catalyses Mg(2+)(in) = Mg(2+)(out). It catalyses the reaction Li(+)(in) = Li(+)(out). It carries out the reaction K(+)(in) = K(+)(out). The catalysed reaction is Sr(2+)(in) = Sr(2+)(out). In terms of biological role, ionotropic glutamate receptor that functions as a ligand-gated cation channel, gated by L-glutamate and glutamatergic agonists such as alpha-amino-3-hydroxy-5-methyl-4-isoxazolepropionic acid (AMPA), quisqualic acid, and kainic acid. L-glutamate acts as an excitatory neurotransmitter at many synapses in the central nervous system. Binding of the excitatory neurotransmitter L-glutamate induces a conformation change, leading to the opening of the cation channel, and thereby converts the chemical signal to an electrical impulse upon entry of monovalent and divalent cations such as sodium and calcium. The receptor then desensitizes rapidly and enters in a transient inactive state, characterized by the presence of bound agonist. In the presence of CACNG2 or CACNG4 or CACNG7 or CACNG8, shows resensitization which is characterized by a delayed accumulation of current flux upon continued application of L-glutamate. Resensitization is blocked by CNIH2 through interaction with CACNG8 in the CACNG8-containing AMPA receptors complex. Calcium (Ca(2+)) permeability depends on subunits composition and, heteromeric channels containing edited GRIA2 subunit are calcium-impermeable. Also permeable to other divalents cations such as strontium(2+) and magnesium(2+) and monovalent cations such as potassium(1+) and lithium(1+). The protein is Glutamate receptor 1 of Homo sapiens (Human).